The sequence spans 466 residues: 3-isopropylmalate dehydratase large subunit (466 aa).

[4Fe-4S] cluster contacts are provided by Cys-349, Cys-410, and Cys-413.

This sequence belongs to the aconitase/IPM isomerase family. LeuC type 1 subfamily. In terms of assembly, heterodimer of LeuC and LeuD. [4Fe-4S] cluster is required as a cofactor.

The enzyme catalyses (2R,3S)-3-isopropylmalate = (2S)-2-isopropylmalate. Its pathway is amino-acid biosynthesis; L-leucine biosynthesis; L-leucine from 3-methyl-2-oxobutanoate: step 2/4. Catalyzes the isomerization between 2-isopropylmalate and 3-isopropylmalate, via the formation of 2-isopropylmaleate. The chain is 3-isopropylmalate dehydratase large subunit from Ruthia magnifica subsp. Calyptogena magnifica.